The following is a 147-amino-acid chain: Cilia- and flagella-associated protein 90 (147 aa).

The interval 1 to 36 (MEDDEEETTASTLRGKPRPPPVSAQSAFSYIPPRRL) is disordered.

In terms of assembly, microtubule inner protein component of sperm flagellar doublet microtubules.

Its subcellular location is the cytoplasm. It localises to the cytoskeleton. It is found in the cilium axoneme. The protein localises to the flagellum axoneme. In terms of biological role, microtubule inner protein (MIP) part of the dynein-decorated doublet microtubules (DMTs) in cilia axoneme, which is required for motile cilia beating. The polypeptide is Cilia- and flagella-associated protein 90 (Homo sapiens (Human)).